The primary structure comprises 240 residues: tRNA (guanine-N(7)-)-methyltransferase (240 aa).

4 residues coordinate S-adenosyl-L-methionine: E70, E95, D122, and D145. Residue D145 is part of the active site. Residues K149, D181, and 218–221 (TKFE) contribute to the substrate site.

This sequence belongs to the class I-like SAM-binding methyltransferase superfamily. TrmB family.

The enzyme catalyses guanosine(46) in tRNA + S-adenosyl-L-methionine = N(7)-methylguanosine(46) in tRNA + S-adenosyl-L-homocysteine. The protein operates within tRNA modification; N(7)-methylguanine-tRNA biosynthesis. Its function is as follows. Catalyzes the formation of N(7)-methylguanine at position 46 (m7G46) in tRNA. The sequence is that of tRNA (guanine-N(7)-)-methyltransferase from Pseudomonas entomophila (strain L48).